An 81-amino-acid chain; its full sequence is Ferredoxin (81 aa).

The 29-residue stretch at 2–30 (KYTIVDKETCIACGACGAAAPDIYDYDED) folds into the 4Fe-4S ferredoxin-type domain. Positions 11, 14, 17, and 61 each coordinate [4Fe-4S] cluster.

[4Fe-4S] cluster is required as a cofactor.

Functionally, ferredoxins are iron-sulfur proteins that transfer electrons in a wide variety of metabolic reactions. In Geobacillus stearothermophilus (Bacillus stearothermophilus), this protein is Ferredoxin (fer).